Here is a 171-residue protein sequence, read N- to C-terminus: Large ribosomal subunit protein bL9 (171 aa).

The protein belongs to the bacterial ribosomal protein bL9 family.

In terms of biological role, binds to the 23S rRNA. The chain is Large ribosomal subunit protein bL9 from Orientia tsutsugamushi (strain Ikeda) (Rickettsia tsutsugamushi).